The following is a 251-amino-acid chain: uncharacterized protein (251 aa).

The signal sequence occupies residues methionine 1–alanine 18.

Belongs to the MlaA family.

This is an uncharacterized protein from Rickettsia prowazekii (strain Madrid E).